Here is a 326-residue protein sequence, read N- to C-terminus: ATPase GET3 (326 aa).

Position 32–39 (32–39 (KGGVGKTT)) interacts with ATP. Aspartate 61 is an active-site residue. Residues glutamate 244 and asparagine 271 each contribute to the ATP site. Residues cysteine 282 and cysteine 285 each coordinate Zn(2+).

This sequence belongs to the arsA ATPase family. In terms of assembly, homodimer.

Its subcellular location is the cytoplasm. It is found in the endoplasmic reticulum. Its function is as follows. ATPase required for the post-translational delivery of tail-anchored (TA) proteins to the endoplasmic reticulum. Recognizes and selectively binds the transmembrane domain of TA proteins in the cytosol. This complex then targets to the endoplasmic reticulum by membrane-bound receptors, where the tail-anchored protein is released for insertion. This process is regulated by ATP binding and hydrolysis. ATP binding drives the homodimer towards the closed dimer state, facilitating recognition of newly synthesized TA membrane proteins. ATP hydrolysis is required for insertion. Subsequently, the homodimer reverts towards the open dimer state, lowering its affinity for the membrane-bound receptor, and returning it to the cytosol to initiate a new round of targeting. The protein is ATPase GET3 of Phaeosphaeria nodorum (strain SN15 / ATCC MYA-4574 / FGSC 10173) (Glume blotch fungus).